The primary structure comprises 158 residues: NADH-quinone oxidoreductase subunit B (158 aa).

[4Fe-4S] cluster is bound by residues Cys36, Cys37, Cys101, and Cys131.

This sequence belongs to the complex I 20 kDa subunit family. As to quaternary structure, NDH-1 is composed of 14 different subunits. Subunits NuoB, C, D, E, F, and G constitute the peripheral sector of the complex. It depends on [4Fe-4S] cluster as a cofactor.

The protein localises to the cell inner membrane. It catalyses the reaction a quinone + NADH + 5 H(+)(in) = a quinol + NAD(+) + 4 H(+)(out). Its function is as follows. NDH-1 shuttles electrons from NADH, via FMN and iron-sulfur (Fe-S) centers, to quinones in the respiratory chain. The immediate electron acceptor for the enzyme in this species is believed to be ubiquinone. Couples the redox reaction to proton translocation (for every two electrons transferred, four hydrogen ions are translocated across the cytoplasmic membrane), and thus conserves the redox energy in a proton gradient. This is NADH-quinone oxidoreductase subunit B from Francisella tularensis subsp. tularensis (strain FSC 198).